The primary structure comprises 883 residues: Phosphoenolpyruvate carboxylase (883 aa).

Residues H138 and K546 contribute to the active site.

The protein belongs to the PEPCase type 1 family. Requires Mg(2+) as cofactor.

The enzyme catalyses oxaloacetate + phosphate = phosphoenolpyruvate + hydrogencarbonate. Forms oxaloacetate, a four-carbon dicarboxylic acid source for the tricarboxylic acid cycle. This Escherichia fergusonii (strain ATCC 35469 / DSM 13698 / CCUG 18766 / IAM 14443 / JCM 21226 / LMG 7866 / NBRC 102419 / NCTC 12128 / CDC 0568-73) protein is Phosphoenolpyruvate carboxylase.